An 88-amino-acid polypeptide reads, in one-letter code: Small ribosomal subunit protein uS15c (88 aa).

Belongs to the universal ribosomal protein uS15 family. In terms of assembly, part of the 30S ribosomal subunit.

It localises to the plastid. Its subcellular location is the chloroplast. In Marchantia polymorpha (Common liverwort), this protein is Small ribosomal subunit protein uS15c (rps15).